The chain runs to 163 residues: Ribosome maturation factor RimM (163 aa).

Residues 90–155 enclose the PRC barrel domain; it reads VGEYYCKDLV…ADIDLNKKRL (66 aa).

It belongs to the RimM family. In terms of assembly, binds ribosomal protein uS19.

Its subcellular location is the cytoplasm. In terms of biological role, an accessory protein needed during the final step in the assembly of 30S ribosomal subunit, possibly for assembly of the head region. Essential for efficient processing of 16S rRNA. May be needed both before and after RbfA during the maturation of 16S rRNA. It has affinity for free ribosomal 30S subunits but not for 70S ribosomes. In Neorickettsia sennetsu (strain ATCC VR-367 / Miyayama) (Ehrlichia sennetsu), this protein is Ribosome maturation factor RimM.